We begin with the raw amino-acid sequence, 182 residues long: ADP-ribosylation factor-like protein 3 (182 aa).

Residue Gly-2 is the site of N-myristoyl glycine attachment. Ser-5 carries the phosphoserine modification. GTP is bound by residues Gly-24–Thr-31, Thr-48, Asp-67–Gln-71, Gly-70, Asn-126–Asp-129, and Ser-159–Leu-161. Mg(2+)-binding residues include Thr-31 and Thr-48.

This sequence belongs to the small GTPase superfamily. Arf family. As to quaternary structure, found in a complex with ARL3, RP2 and UNC119 (or UNC119B); RP2 induces hydrolysis of GTP ARL3 in the complex, leading to the release of UNC119 (or UNC119B). Interacts with RP2; interaction is direct and stimulated with the activated GTP-bound form of ARL3. Interacts with SYS1. Interacts with ARL2BP; the GTP-bound form interacts with ARL2BP. Microtubule-associated protein. Does not interact with TBCC. Interacts with RP2. Interacts with PDE6D; the interaction occurs specifically with the GTP-bound form of ARL3. Interacts with GGA1; the interaction recruits PKD1:PKD2 complex to trans-Golgi network and is required for ciliary targeting of PKD1:PKD2 complex. Interacts with DNAAF9.

The protein resides in the golgi apparatus membrane. Its subcellular location is the cytoplasm. The protein localises to the cytoskeleton. It localises to the spindle. It is found in the nucleus. The protein resides in the microtubule organizing center. Its subcellular location is the centrosome. The protein localises to the cell projection. It localises to the cilium. Its function is as follows. Small GTP-binding protein which cycles between an inactive GDP-bound and an active GTP-bound form, and the rate of cycling is regulated by guanine nucleotide exchange factors (GEF) and GTPase-activating proteins (GAP). Required for normal cytokinesis and cilia signaling. Required for targeting proteins to the cilium, including myristoylated NPHP3 and prenylated INPP5E. Targets NPHP3 to the ciliary membrane by releasing myristoylated NPHP3 from UNC119B cargo adapter into the cilium. Requires assistance from GTPase-activating proteins (GAPs) like RP2 and PDE6D, in order to cycle between inactive GDP-bound and active GTP-bound forms. Required for PKD1:PKD2 complex targeting from the trans-Golgi network to the cilium. The sequence is that of ADP-ribosylation factor-like protein 3 from Mus musculus (Mouse).